The chain runs to 766 residues: Ent-copalyl diphosphate synthase 3 (766 aa).

A chloroplast-targeting transit peptide spans 1-30 (FRSTAAGRCLPVTCCVFPRHFRVSSSSILP). Substrate is bound at residue Lys222. The Mg(2+) site is built by Asp354 and Asp356. The DXDD motif motif lies at 354-357 (DVDD). Lys440 provides a ligand contact to substrate.

It belongs to the terpene synthase family. Tpsc subfamily. Mg(2+) serves as cofactor. Accumulates in leaves, and, at low levels, in germinating seeds.

It localises to the plastid. The protein resides in the chloroplast. The catalysed reaction is (2E,6E,10E)-geranylgeranyl diphosphate = ent-copalyl diphosphate. The protein operates within plant hormone biosynthesis; gibberellin biosynthesis. Its pathway is secondary metabolite biosynthesis; terpenoid biosynthesis. Its function is as follows. Involved in the biosynthesis of ent-kaurene diterpenoids natural products such as oridonin, miltiradiene, eriocalyxin B and nezukol, known to exhibit antitumor, anti-inflammatory and antibacterial activities, and in the production of gibberellins phytohormones. Catalyzes the conversion of (2E,6E,10E)-geranylgeranyl diphosphate (GGPP) to ent-copalyl diphosphate (ent-CPP). The chain is Ent-copalyl diphosphate synthase 3 from Isodon eriocalyx (Plectranthus eriocalyx).